Reading from the N-terminus, the 448-residue chain is tRNA modification GTPase MnmE (448 aa).

The (6S)-5-formyl-5,6,7,8-tetrahydrofolate site is built by Arg-25, Glu-83, and Lys-122. Positions 218–372 constitute a TrmE-type G domain; that stretch reads GFKVAIIGKP…LTQKLQKLLD (155 aa). Asn-228 provides a ligand contact to K(+). GTP-binding positions include 228 to 233, 247 to 253, and 272 to 275; these read NTGKSS, SDIAGTT, and DTAG. Ser-232 contributes to the Mg(2+) binding site. K(+) is bound by residues Ser-247, Ile-249, and Thr-252. Thr-253 serves as a coordination point for Mg(2+). Lys-448 lines the (6S)-5-formyl-5,6,7,8-tetrahydrofolate pocket.

It belongs to the TRAFAC class TrmE-Era-EngA-EngB-Septin-like GTPase superfamily. TrmE GTPase family. As to quaternary structure, homodimer. Heterotetramer of two MnmE and two MnmG subunits. K(+) is required as a cofactor.

Its subcellular location is the cytoplasm. Exhibits a very high intrinsic GTPase hydrolysis rate. Involved in the addition of a carboxymethylaminomethyl (cmnm) group at the wobble position (U34) of certain tRNAs, forming tRNA-cmnm(5)s(2)U34. The polypeptide is tRNA modification GTPase MnmE (Nitratiruptor sp. (strain SB155-2)).